The chain runs to 178 residues: Large ribosomal subunit protein uL16 (178 aa).

This sequence belongs to the universal ribosomal protein uL16 family.

The chain is Large ribosomal subunit protein uL16 from Saccharolobus islandicus (strain Y.N.15.51 / Yellowstone #2) (Sulfolobus islandicus).